The chain runs to 135 residues: Ribonuclease P protein component (135 aa).

The disordered stretch occupies residues 115–135 (ETEPVSPVSPTSLPQNERGSP). A compositionally biased stretch (polar residues) spans 122–135 (VSPTSLPQNERGSP).

This sequence belongs to the RnpA family. Consists of a catalytic RNA component (M1 or rnpB) and a protein subunit.

The enzyme catalyses Endonucleolytic cleavage of RNA, removing 5'-extranucleotides from tRNA precursor.. RNaseP catalyzes the removal of the 5'-leader sequence from pre-tRNA to produce the mature 5'-terminus. It can also cleave other RNA substrates such as 4.5S RNA. The protein component plays an auxiliary but essential role in vivo by binding to the 5'-leader sequence and broadening the substrate specificity of the ribozyme. In Chloroflexus aggregans (strain MD-66 / DSM 9485), this protein is Ribonuclease P protein component.